Consider the following 293-residue polypeptide: 4-hydroxy-tetrahydrodipicolinate synthase (293 aa).

T44 is a binding site for pyruvate. Y132 functions as the Proton donor/acceptor in the catalytic mechanism. Catalysis depends on K160, which acts as the Schiff-base intermediate with substrate. I204 contributes to the pyruvate binding site.

It belongs to the DapA family. Homotetramer; dimer of dimers.

The protein localises to the cytoplasm. It carries out the reaction L-aspartate 4-semialdehyde + pyruvate = (2S,4S)-4-hydroxy-2,3,4,5-tetrahydrodipicolinate + H2O + H(+). Its pathway is amino-acid biosynthesis; L-lysine biosynthesis via DAP pathway; (S)-tetrahydrodipicolinate from L-aspartate: step 3/4. Its function is as follows. Catalyzes the condensation of (S)-aspartate-beta-semialdehyde [(S)-ASA] and pyruvate to 4-hydroxy-tetrahydrodipicolinate (HTPA). The protein is 4-hydroxy-tetrahydrodipicolinate synthase of Hyphomonas neptunium (strain ATCC 15444).